Reading from the N-terminus, the 275-residue chain is Large ribosomal subunit protein uL2 (275 aa).

Positions 223–275 (VAMNPVDHPHGGGEGRTGEGRVPVSPWGTPAKGYRTRNNKRTDNMIVRRRHSK) are disordered. Residues 229-241 (DHPHGGGEGRTGE) show a composition bias toward basic and acidic residues.

It belongs to the universal ribosomal protein uL2 family. Part of the 50S ribosomal subunit. Forms a bridge to the 30S subunit in the 70S ribosome.

In terms of biological role, one of the primary rRNA binding proteins. Required for association of the 30S and 50S subunits to form the 70S ribosome, for tRNA binding and peptide bond formation. It has been suggested to have peptidyltransferase activity; this is somewhat controversial. Makes several contacts with the 16S rRNA in the 70S ribosome. This is Large ribosomal subunit protein uL2 from Laribacter hongkongensis (strain HLHK9).